We begin with the raw amino-acid sequence, 304 residues long: tRNA dimethylallyltransferase (304 aa).

Residue 16-23 (GPTASGKS) coordinates ATP. Substrate is bound at residue 18–23 (TASGKS). 2 interaction with substrate tRNA regions span residues 41–44 (DSMQ) and 165–169 (QRIIR).

This sequence belongs to the IPP transferase family. As to quaternary structure, monomer. Requires Mg(2+) as cofactor.

The catalysed reaction is adenosine(37) in tRNA + dimethylallyl diphosphate = N(6)-dimethylallyladenosine(37) in tRNA + diphosphate. Functionally, catalyzes the transfer of a dimethylallyl group onto the adenine at position 37 in tRNAs that read codons beginning with uridine, leading to the formation of N6-(dimethylallyl)adenosine (i(6)A). This chain is tRNA dimethylallyltransferase, found in Allorhizobium ampelinum (strain ATCC BAA-846 / DSM 112012 / S4) (Agrobacterium vitis (strain S4)).